Consider the following 311-residue polypeptide: Malate dehydrogenase (311 aa).

NAD(+) is bound by residues G7 to G13 and D34. Positions 81 and 87 each coordinate substrate. NAD(+)-binding positions include N94 and I117–N119. Substrate-binding residues include N119 and R153. H177 (proton acceptor) is an active-site residue. M227 serves as a coordination point for NAD(+).

Belongs to the LDH/MDH superfamily. MDH type 1 family. Homodimer.

The enzyme catalyses (S)-malate + NAD(+) = oxaloacetate + NADH + H(+). Functionally, catalyzes the reversible oxidation of malate to oxaloacetate. The polypeptide is Malate dehydrogenase (Shewanella denitrificans (strain OS217 / ATCC BAA-1090 / DSM 15013)).